The chain runs to 209 residues: Ribosomal RNA small subunit methyltransferase G (209 aa).

S-adenosyl-L-methionine contacts are provided by residues Gly-77, Met-82, 128 to 129 (VE), and Arg-143.

Belongs to the methyltransferase superfamily. RNA methyltransferase RsmG family.

The protein localises to the cytoplasm. It catalyses the reaction guanosine(527) in 16S rRNA + S-adenosyl-L-methionine = N(7)-methylguanosine(527) in 16S rRNA + S-adenosyl-L-homocysteine. In terms of biological role, specifically methylates the N7 position of guanine in position 527 of 16S rRNA. This chain is Ribosomal RNA small subunit methyltransferase G, found in Chromobacterium violaceum (strain ATCC 12472 / DSM 30191 / JCM 1249 / CCUG 213 / NBRC 12614 / NCIMB 9131 / NCTC 9757 / MK).